The sequence spans 190 residues: Protein GrpE (190 aa).

The interval 1–41 is disordered; it reads MAKEKQEEQQKQTAPENEKAPKKDIKKEASDKKGDQTSKLK.

Belongs to the GrpE family. Homodimer.

It is found in the cytoplasm. Functionally, participates actively in the response to hyperosmotic and heat shock by preventing the aggregation of stress-denatured proteins, in association with DnaK and GrpE. It is the nucleotide exchange factor for DnaK and may function as a thermosensor. Unfolded proteins bind initially to DnaJ; upon interaction with the DnaJ-bound protein, DnaK hydrolyzes its bound ATP, resulting in the formation of a stable complex. GrpE releases ADP from DnaK; ATP binding to DnaK triggers the release of the substrate protein, thus completing the reaction cycle. Several rounds of ATP-dependent interactions between DnaJ, DnaK and GrpE are required for fully efficient folding. The chain is Protein GrpE from Limosilactobacillus reuteri (strain DSM 20016) (Lactobacillus reuteri).